We begin with the raw amino-acid sequence, 877 residues long: Polycomb protein Scm (877 aa).

Positions 1-57 are disordered; sequence MSGGRDSSTSSGSNSAAPGASTNATSSASASASSTSTSASPGSTTSPASTQRQRGRP. Positions 7–50 are enriched in low complexity; that stretch reads SSTSSGSNSAAPGASTNATSSASASASSTSTSASPGSTTSPAST. The FCS-type zinc-finger motif lies at 54-93; sequence RGRPAKRATCTWCGEGKLPLQYVLPTQTGKKEFCSETCIA. Positions 63, 66, 87, and 91 each coordinate Zn(2+). MBT repeat units follow at residues 175–273 and 281–382; these read FDWD…LQPP and SSWP…MQPP. Disordered regions lie at residues 535 to 621, 652 to 692, and 713 to 735; these read NSRK…SNKV, TNTN…GGSA, and ANVKPSNSYYKSPTTLSSSASLP. Phosphothreonine is present on T546. Phosphoserine is present on residues S549 and S550. Polar residues predominate over residues 560-569; sequence QSNSATTSPS. The residue at position 585 (S585) is a Phosphoserine. Low complexity predominate over residues 598–620; sequence ASQQNSNHSLNNNNNSASKSSNK. Over residues 724–735 the composition is skewed to low complexity; the sequence is SPTTLSSSASLP. Positions 806–876 constitute an SAM domain; it reads WTIEEVIQYI…KVNGRRNNLA (71 aa).

It belongs to the SCM family. Scm associates with the PRC1 core complex containing PSC, PC, PH and Sce/RING1. Forms homotypic and heterotypic interactions. Interacts with the SAM domain of ph-p via its SAM domain in vitro. Interacts with corto in vitro.

The protein resides in the nucleus. Polycomb group (PcG) protein. PcG proteins act by forming multiprotein complexes, which are required to maintain the transcriptionally repressive state of homeotic genes throughout development. PcG proteins are not required to initiate repression, but to maintain it during later stages of development. They probably act via the methylation of histones, rendering chromatin heritably changed in its expressibility. The polypeptide is Polycomb protein Scm (Drosophila melanogaster (Fruit fly)).